A 69-amino-acid chain; its full sequence is Guanine nucleotide-binding protein subunit gamma (69 aa).

S2 is subject to N-acetylserine. A Cysteine methyl ester modification is found at C66. Residue C66 is the site of S-geranylgeranyl cysteine attachment. The propeptide at 67–69 (SVL) is removed in mature form.

This sequence belongs to the G protein gamma family. In terms of assembly, g proteins are composed of 3 units, alpha, beta and gamma. Interacts with gpbA, and this requires phlp1. In terms of processing, this protein is thought to be subject to lipidation, and this requires phlp1.

The protein resides in the cell membrane. Guanine nucleotide-binding proteins (G proteins) are involved as a modulator or transducer in various transmembrane signaling systems. This major G-protein of the squid photoreceptor is involved in visual transduction. The beta and gamma chains are required for the GTPase activity, for replacement of GDP by GTP, and for G protein-effector interaction. Required for normal chemotaxis in response to cAMP. The sequence is that of Guanine nucleotide-binding protein subunit gamma (gpgA) from Dictyostelium discoideum (Social amoeba).